Reading from the N-terminus, the 269-residue chain is Phosphate import ATP-binding protein PstB (269 aa).

Positions 23–264 (IATRNLEFYY…PSKQQTEDYI (242 aa)) constitute an ABC transporter domain. 55–62 (GPSGCGKS) is an ATP binding site.

This sequence belongs to the ABC transporter superfamily. Phosphate importer (TC 3.A.1.7) family. The complex is composed of two ATP-binding proteins (PstB), two transmembrane proteins (PstC and PstA) and a solute-binding protein (PstS).

It is found in the cell inner membrane. The catalysed reaction is phosphate(out) + ATP + H2O = ADP + 2 phosphate(in) + H(+). Functionally, part of the ABC transporter complex PstSACB involved in phosphate import. Responsible for energy coupling to the transport system. This chain is Phosphate import ATP-binding protein PstB, found in Xylella fastidiosa (strain Temecula1 / ATCC 700964).